Consider the following 380-residue polypeptide: Cytochrome b (380 aa).

The next 4 helical transmembrane spans lie at 34–54, 78–99, 114–134, and 179–199; these read FGSLLGLCLVSQILTGLFLAM, WLLRNLHANGASFMFICLYMHI, WNIGVMLLVLTMATAFLGYVL, and FFAFHFFLPFMIAGLSVVHLL. Residues H84 and H98 each contribute to the heme b site. Positions 183 and 197 each coordinate heme b. H202 contacts a ubiquinone. The next 4 helical transmembrane spans lie at 227-247, 289-309, 321-341, and 348-368; these read YKDVVGFVVLLAGLVFIALFS, LGGVVALAMSIVVLFFMPFVH, LAQVLFWLMVVNVLLLTWLGG, and YIFLGQAASVIYFVNILLFIP.

The protein belongs to the cytochrome b family. In terms of assembly, the cytochrome bc1 complex contains 3 respiratory subunits (MT-CYB, CYC1 and UQCRFS1), 2 core proteins (UQCRC1 and UQCRC2) and probably 6 low-molecular weight proteins. Heme b is required as a cofactor.

The protein localises to the mitochondrion inner membrane. In terms of biological role, component of the ubiquinol-cytochrome c reductase complex (complex III or cytochrome b-c1 complex) that is part of the mitochondrial respiratory chain. The b-c1 complex mediates electron transfer from ubiquinol to cytochrome c. Contributes to the generation of a proton gradient across the mitochondrial membrane that is then used for ATP synthesis. The protein is Cytochrome b (MT-CYB) of Branchiostoma lanceolatum (Common lancelet).